A 92-amino-acid chain; its full sequence is C-C motif chemokine 5 (92 aa).

Positions 1-23 (MKVSTAAFAVLLTAAAFCTPASA) are cleaved as a signal peptide. 2 cysteine pairs are disulfide-bonded: cysteine 33–cysteine 57 and cysteine 34–cysteine 73.

The protein belongs to the intercrine beta (chemokine CC) family.

It localises to the secreted. In terms of biological role, chemoattractant for blood monocytes, memory T-helper cells and eosinophils. Causes the release of histamine from basophils and activates eosinophils. May activate several chemokine receptors including CCR1, CCR3, CCR4 and CCR5. May also be an agonist of the G protein-coupled receptor GPR75. Together with GPR75, may play a role in neuron survival through activation of a downstream signaling pathway involving the PI3, Akt and MAP kinases. By activating GPR75 may also play a role in insulin secretion by islet cells. This Felis catus (Cat) protein is C-C motif chemokine 5 (CCL5).